The following is a 265-amino-acid chain: Protein IL-40 (265 aa).

The N-terminal stretch at Met-1–Ala-20 is a signal peptide. N-linked (GlcNAc...) asparagine glycosylation is found at Asn-86 and Asn-132.

Expressed in fetal liver and bone marrow. Expressed in peripheral blood lymphocyte B cells.

The protein localises to the secreted. In terms of biological role, probable B cell-associated cytokine that plays a role in the regulation of humoral immune responses. Involved in lymphocyte B cell development and immunoglobulin/IgA production. This chain is Protein IL-40, found in Homo sapiens (Human).